A 420-amino-acid chain; its full sequence is L-glutamine:2-deoxy-scyllo-inosose aminotransferase (420 aa).

Lys-201 carries the N6-(pyridoxal phosphate)lysine modification.

It belongs to the DegT/DnrJ/EryC1 family. L-glutamine:2-deoxy-scyllo-inosose/scyllo-inosose aminotransferase subfamily. Pyridoxal 5'-phosphate is required as a cofactor.

The catalysed reaction is 2-deoxy-L-scyllo-inosose + L-glutamine = 2-deoxy-scyllo-inosamine + 2-oxoglutaramate. It carries out the reaction 3-amino-2,3-dideoxy-scyllo-inosose + L-glutamine = 2-deoxystreptamine + 2-oxoglutaramate. It participates in metabolic intermediate biosynthesis; 2-deoxystreptamine biosynthesis; 2-deoxystreptamine from D-glucose 6-phosphate: step 2/4. The protein operates within antibiotic biosynthesis; gentamicin biosynthesis. Functionally, catalyzes the PLP-dependent transamination of 2-deoxy-scyllo-inosose (2-DOI) to form 2-deoxy-scyllo-inosamine (2-DOIA) using L-glutamine as the amino donor. Also catalyzes the transamination of 3-amino-2,3-dideoxy-scyllo-inosose (keto-2-DOIA) into 2-deoxystreptamine (2-DOS). The protein is L-glutamine:2-deoxy-scyllo-inosose aminotransferase (gntA) of Micromonospora echinospora (Micromonospora purpurea).